Reading from the N-terminus, the 892-residue chain is Polyribonucleotide nucleotidyltransferase (892 aa).

Residues 407–427 are disordered; that stretch reads YMHNYEMPPYSTGETGRVGSP. Mg(2+) is bound by residues Asp521 and Asp527. Residues 587–646 form the KH domain; that stretch reads PRIITTTVPVDKIGEVIGPKGKMINQIQEDTGAEIAIEDDGTVYISSEGGEAAEKAKEII. The region spanning 658 to 730 is the S1 motif domain; it reads GETYNGKVVK…DRGKISLAIP (73 aa). The segment at 727–892 is disordered; sequence LAIPGFEDQE…VRRDFDPFED (166 aa). 2 stretches are compositionally biased toward basic and acidic residues: residues 739–844 and 851–877; these read APRR…DRRS and RRDDRNPRYAADENYDEYRADREERSE.

Belongs to the polyribonucleotide nucleotidyltransferase family. Mg(2+) is required as a cofactor.

The protein localises to the cytoplasm. It catalyses the reaction RNA(n+1) + phosphate = RNA(n) + a ribonucleoside 5'-diphosphate. Its function is as follows. Involved in mRNA degradation. Catalyzes the phosphorolysis of single-stranded polyribonucleotides processively in the 3'- to 5'-direction. In Bifidobacterium adolescentis (strain ATCC 15703 / DSM 20083 / NCTC 11814 / E194a), this protein is Polyribonucleotide nucleotidyltransferase.